A 403-amino-acid chain; its full sequence is MAQNKPVKKIVLAYSGGLDTSVILTWLKDTYGCEVIAFTADIGQKEELSGLEEKGIKTGASKVYIQDLRLEFARDFIFPAIQGNAIYEMRYLLGTSLARPLIAKAMVEVAEKEGADAFAHGATGKGNDQVRFELGVKSLAPEKTIIAPWRIWSFGGRSDLIEYAKSKGIPVPVTAEKPYSMDRNLMHISYEGGILEDPYKEPDEKMFLLTTSPEKAPDAPEYLELDFEEGNCVAINGKKMNPLEIMETLNTIAGKHGVGRVDIVENRLVGIKSRGVYETPGGTILFLAHRDLESITIDRDTQHHKDKLSIEFAELIYNGHWFSSRMKAVRAFITETQRYVSGTVRIKLYKGVCSVVGRKSQVSLYNPEMATFEKEELYNQKDAEGFINIYGLPAQETARLRKK.

ATP contacts are provided by residues 13-21 (AYSGGLDTS) and Ala40. Tyr91 and Ser96 together coordinate L-citrulline. Gly121 lines the ATP pocket. Residues Thr123, Asn127, and Asp128 each coordinate L-aspartate. Asn127 contributes to the L-citrulline binding site. Residues Arg131, Ser180, Ser189, Glu265, and Tyr277 each contribute to the L-citrulline site.

It belongs to the argininosuccinate synthase family. Type 1 subfamily. Homotetramer.

The protein resides in the cytoplasm. It carries out the reaction L-citrulline + L-aspartate + ATP = 2-(N(omega)-L-arginino)succinate + AMP + diphosphate + H(+). It functions in the pathway amino-acid biosynthesis; L-arginine biosynthesis; L-arginine from L-ornithine and carbamoyl phosphate: step 2/3. The polypeptide is Argininosuccinate synthase (Leptospira interrogans serogroup Icterohaemorrhagiae serovar Lai (strain 56601)).